A 521-amino-acid chain; its full sequence is Histidine--tRNA ligase (521 aa).

L-histidine-binding positions include Asp137–Thr139, Arg164, Gln180, Asp184, Arg338, and Tyr342–Tyr343.

Belongs to the class-II aminoacyl-tRNA synthetase family.

It catalyses the reaction tRNA(His) + L-histidine + ATP = L-histidyl-tRNA(His) + AMP + diphosphate + H(+). Functionally, involved in protein synthesis. Catalyzes the specific attachment of an amino acid to its cognate tRNA in a 2 step reaction: the amino acid (AA) is first activated by ATP to form AA-AMP and then transferred to the acceptor end of the tRNA. Required for germ cell development. This chain is Histidine--tRNA ligase, found in Caenorhabditis elegans.